The following is a 336-amino-acid chain: ATP-dependent 6-phosphofructokinase (336 aa).

Residue glycine 11 coordinates ATP. Residue 21 to 25 (RAVVR) coordinates ADP. Residues 72 to 73 (RY) and 102 to 105 (GDGS) each bind ATP. Aspartate 103 is a binding site for Mg(2+). Substrate is bound at residue 125-127 (TID). Aspartate 127 serves as the catalytic Proton acceptor. ADP is bound at residue arginine 154. Substrate contacts are provided by residues arginine 162 and 169-171 (MGR). ADP-binding positions include 185-187 (GAD), lysine 211, and 213-215 (KKH). Substrate is bound by residues glutamate 222, arginine 244, and 250–253 (HIQR).

It belongs to the phosphofructokinase type A (PFKA) family. ATP-dependent PFK group I subfamily. Prokaryotic clade 'B1' sub-subfamily. As to quaternary structure, homotetramer. The cofactor is Mg(2+).

It is found in the cytoplasm. It catalyses the reaction beta-D-fructose 6-phosphate + ATP = beta-D-fructose 1,6-bisphosphate + ADP + H(+). It participates in carbohydrate degradation; glycolysis; D-glyceraldehyde 3-phosphate and glycerone phosphate from D-glucose: step 3/4. Allosterically activated by ADP and other diphosphonucleosides, and allosterically inhibited by phosphoenolpyruvate. Catalyzes the phosphorylation of D-fructose 6-phosphate to fructose 1,6-bisphosphate by ATP, the first committing step of glycolysis. The polypeptide is ATP-dependent 6-phosphofructokinase (Streptococcus sanguinis (strain SK36)).